We begin with the raw amino-acid sequence, 451 residues long: Probable metal transport system membrane protein CT_069 (451 aa).

8 consecutive transmembrane segments (helical) span residues S14 to V34, P38 to L58, W70 to L90, S100 to V120, T145 to Y165, V192 to I212, I233 to V253, and I269 to I289. Residues P432–C451 are disordered. A compositionally biased stretch (basic and acidic residues) spans Y434–C451.

The protein belongs to the ABC-3 integral membrane protein family.

It is found in the cell inner membrane. In terms of biological role, part of an ATP-driven transport system CT_067/CT_068/CT_069/CT_070 for a metal. This chain is Probable metal transport system membrane protein CT_069, found in Chlamydia trachomatis serovar D (strain ATCC VR-885 / DSM 19411 / UW-3/Cx).